We begin with the raw amino-acid sequence, 258 residues long: GPI alpha-1,4-mannosyltransferase I, stabilizing subunit (258 aa).

The N-terminal stretch at 1-21 (MAARVAAVRAAAWLLLGAATG) is a signal peptide. The Lumenal portion of the chain corresponds to 22–230 (LTRGPAAAFT…PVGLTVHTSL (209 aa)). N-linked (GlcNAc...) asparagine glycosylation is present at Asn-103. A helical transmembrane segment spans residues 231–251 (VCSVTLLITILCSTLILVAVF). Over 252-258 (KYGHFSL) the chain is Cytoplasmic.

This sequence belongs to the PIGX family. In terms of assembly, part of the glycosylphosphatidylinositol-mannosyltransferase I complex that is composed of PIGM and PIGX. Interacts with PIGM; PIGX stabilizes PIGM.

The protein localises to the endoplasmic reticulum membrane. It participates in glycolipid biosynthesis; glycosylphosphatidylinositol-anchor biosynthesis. Stabilizing subunit of the glycosylphosphatidylinositol-mannosyltransferase I complex which catalyzes the transfer of the first mannose, via an alpha-1,4 bond from a dolichol-phosphate-mannose (Dol-P-Man) to the glucosaminyl acyl phosphatidylinositol (GlcN-(acyl)PI) intermediate to generate alpha-D-Man-(1-&gt;4)-alpha-D-GlcN-(1-&gt;6)-(1-radyl,2-acyl-sn-glycero-3-phospho)-2-acyl-inositol and participates in the sixth step of the glycosylphosphatidylinositol-anchor biosynthesis. Probably acts by stabilizing the mannosyltransferase PIGM. In Homo sapiens (Human), this protein is GPI alpha-1,4-mannosyltransferase I, stabilizing subunit.